A 135-amino-acid polypeptide reads, in one-letter code: Thyrostimulin beta-5 subunit (135 aa).

An N-terminal signal peptide occupies residues 1 to 19; the sequence is MVMPLVLSLALTPPPLCHA. 5 disulfides stabilise this stretch: C30–C87, C54–C102, C63–C118, C67–C120, and C123–C130.

This sequence belongs to the glycoprotein hormones subunit beta family. Heterodimer with GPHA2; non-covalently-linked. As to expression, expressed by the venom duct.

It localises to the secreted. This is Thyrostimulin beta-5 subunit from Conus victoriae (Queen Victoria cone).